The sequence spans 451 residues: uncharacterized protein (451 aa).

Mn(2+) contacts are provided by D305, D316, H384, E414, and E428.

This sequence belongs to the peptidase M24B family. Requires Mn(2+) as cofactor.

This is an uncharacterized protein from Schizosaccharomyces pombe (strain 972 / ATCC 24843) (Fission yeast).